We begin with the raw amino-acid sequence, 504 residues long: Sodium-coupled neutral amino acid transporter 3 (504 aa).

N-linked (GlcNAc...) asparagine glycosylation is present at N74. The next 5 helical transmembrane spans lie at G83–L103, V106–I126, A144–I164, M187–M207, and L213–Y233. A disulfide bridge connects residues C240 and C275. 4 N-linked (GlcNAc...) asparagine glycosylation sites follow: N247, N248, N252, and N323. Helical transmembrane passes span L324 to F344, I366 to F386, V408 to I428, I431 to F451, and A471 to I491.

It belongs to the amino acid/polyamine transporter 2 family.

Its subcellular location is the cell membrane. It is found in the basolateral cell membrane. It catalyses the reaction L-glutamine(out) + Na(+)(out) + H(+)(in) = L-glutamine(in) + Na(+)(in) + H(+)(out). The catalysed reaction is L-asparagine(out) + Na(+)(out) + H(+)(in) = L-asparagine(in) + Na(+)(in) + H(+)(out). The enzyme catalyses L-histidine(out) + Na(+)(out) + H(+)(in) = L-histidine(in) + Na(+)(in) + H(+)(out). Functionally, symporter that cotransports specific neutral amino acids and sodium ions, coupled to an H(+) antiporter activity. Mainly participates in the glutamate-GABA-glutamine cycle in brain where it transports L-glutamine from astrocytes in the intercellular space for the replenishment of both neurotransmitters glutamate and gamma-aminobutyric acid (GABA) in neurons and also functions as the major influx transporter in ganglion cells mediating the uptake of glutamine. The transport activity is specific for L-glutamine, L-histidine and L-asparagine. The transport is electroneutral coupled to the cotransport of 1 Na(+) and the antiport of 1 H(+). The transport is pH dependent, saturable, Li(+) tolerant and functions in both direction depending on the concentration gradients of its substrates and cotransported ions. Also mediates an amino acid-gated H(+) conductance that is not stoichiometrically coupled to the amino acid transport but which influences the ionic gradients that drive the amino acid transport. In addition, may play a role in nitrogen metabolism, amino acid homeostasis, glucose metabolism and renal ammoniagenesis. This chain is Sodium-coupled neutral amino acid transporter 3, found in Homo sapiens (Human).